The chain runs to 795 residues: Protein Jade-3 (795 aa).

Positions 1–25 are enriched in low complexity; that stretch reads MKRLRTPSSSDSSDNESPSTSFSSN. The disordered stretch occupies residues 1 to 41; sequence MKRLRTPSSSDSSDNESPSTSFSSNKYGSKPGTPASAQKKP. Residues 201 to 251 form a PHD-type 1 zinc finger; the sequence is DVICDVCRSPDSEEGNDMVFCDKCNICVHQACYGIVKVPDGNWLCRTCVLG. Residues 253–287 form a C2HC pre-PHD-type zinc finger; that stretch reads TPQCLLCPKTGGAMKATRAGTKWAHVSCALWIPEV. The PHD-type 2 zinc-finger motif lies at 311-367; the sequence is LICSLCKLKTGACIQCSVKNCTIPFHVTCAFEHSLEMKTILDEGDEVKFKSYCLKHS. 3 disordered regions span residues 630-654, 667-687, and 714-795; these read HGQS…NGIL, AASE…SGFH, and FEKN…SVQR. Polar residues-rich tracts occupy residues 678-687 and 720-732; these read SGKSQSSGFH and KSSG…STER.

It belongs to the JADE family. Component of the HBO1 complex.

In terms of biological role, scaffold subunit of some HBO1 complexes, which have a histone H4 acetyltransferase activity. The sequence is that of Protein Jade-3 (jade3) from Danio rerio (Zebrafish).